The following is a 485-amino-acid chain: ETS translocation variant 4 (485 aa).

A Glycyl lysine isopeptide (Lys-Gly) (interchain with G-Cter in SUMO2) cross-link involves residue Lys-6. 2 disordered regions span residues 79 to 114 (PDFH…RKPP) and 135 to 214 (IAIK…QHQL). Lys-95 participates in a covalent cross-link: Glycyl lysine isopeptide (Lys-Gly) (interchain with G-Cter in SUMO). Ser-100 carries the post-translational modification Phosphoserine. Lys-138 participates in a covalent cross-link: Glycyl lysine isopeptide (Lys-Gly) (interchain with G-Cter in SUMO2). Ser-139 and Ser-148 each carry phosphoserine. The span at 158 to 171 (QQQSLLRASSSSQS) shows a compositional bias: low complexity. The residue at position 215 (Ser-215) is a Phosphoserine. Glycyl lysine isopeptide (Lys-Gly) (interchain with G-Cter in SUMO) cross-links involve residues Lys-227 and Lys-261. Lys-323 is covalently cross-linked (Glycyl lysine isopeptide (Lys-Gly) (interchain with G-Cter in SUMO2)). A DNA-binding region (ETS) is located at residues 342–422 (LQLWQFLVAL…AGERYVYKFV (81 aa)).

It belongs to the ETS family. In terms of processing, sumoylated; enhanced upon ERK/MAP kinase pathway activation it positively regulates the transcriptional activator capacity. Sumoylation at Lys-95 probably requires phosphorylation at Ser-100. Transiently polysumoylated and desumoylated by SENP1. Sumoylation is a prerequisite to polyubiquitination which in turn increases proteasomal-mediated degradation. Probably polyubiquitinated by RNF4 and deubiquitinated by USP2. As to expression, epididymis and brain.

It is found in the nucleus. Its function is as follows. Transcriptional activator. May play a role in keratinocyte differentiation. This Mus musculus (Mouse) protein is ETS translocation variant 4 (Etv4).